Here is a 551-residue protein sequence, read N- to C-terminus: Xylulose kinase (551 aa).

His-114, Arg-185, Asp-295, and Asn-296 together coordinate substrate. Residues Trp-370, 456–457 (GA), and Asn-460 contribute to the ATP site.

The protein belongs to the FGGY kinase family. Monomer.

It catalyses the reaction D-xylulose + ATP = D-xylulose 5-phosphate + ADP + H(+). Functionally, phosphorylates D-xylulose to produce D-xylulose 5-phosphate, a molecule that may play an important role in the regulation of glucose metabolism and lipogenesis. In Mus musculus (Mouse), this protein is Xylulose kinase (Xylb).